The following is a 350-amino-acid chain: 4-hydroxy-2-oxovalerate aldolase 3 (350 aa).

One can recognise a Pyruvate carboxyltransferase domain in the interval 13–265; that stretch reads VVFHDMCLRD…DTGVDLFRLM (253 aa). 21 to 22 is a substrate binding site; the sequence is RD. D22 is a Mn(2+) binding site. The active-site Proton acceptor is the H25. Residues S175 and H204 each coordinate substrate. Mn(2+) is bound by residues H204 and H206. Position 295 (Y295) interacts with substrate.

The protein belongs to the 4-hydroxy-2-oxovalerate aldolase family.

The catalysed reaction is (S)-4-hydroxy-2-oxopentanoate = acetaldehyde + pyruvate. This chain is 4-hydroxy-2-oxovalerate aldolase 3 (lapG), found in Azotobacter vinelandii (strain DJ / ATCC BAA-1303).